Reading from the N-terminus, the 397-residue chain is MNIHEYQAKALLKSFGAPVADGVAIFSADEAEAAAKQLPGPLYVVKSQIHAGGRGKGKFKELSPDAKGGVRLAKSIEDVVANSKDMLGNTLVTKQTGPAGKQVNRLYIEDGADIDRELYLSILVDRSVGQVAFVVSTEGGMDIETVAHDTPEKIITVAIDPAAGVTAADSTAISDALKLEGAAREDGAKLFPILYKAFVEKDMALLEVNPLIVMTNGRLRVLDAKVSFDGNALFRHEDIRALRDKSEEDEKEIQAHEYDLAYVALDGNIGCMVNGAGLAMATMDIIKLYGAEPANFLDVGGGATKEKVTAAFKIITADPAVQGILVNIFGGIMKCDVIAEGVLAAVKEVGLKVPLVVRLEGTNVELGKKIINESGLNVISADDLDDAAQKIVKAVKG.

The ATP-grasp domain occupies 9–254; it reads KALLKSFGAP…KSEEDEKEIQ (246 aa). Residues Lys-46, 53–55, Glu-109, Ala-112, and Glu-117 contribute to the ATP site; that span reads GRG. Asn-209 and Asp-223 together coordinate Mg(2+). Substrate-binding positions include Asn-274 and 331-333; that span reads GIM.

Belongs to the succinate/malate CoA ligase beta subunit family. As to quaternary structure, heterotetramer of two alpha and two beta subunits. Requires Mg(2+) as cofactor.

It catalyses the reaction succinate + ATP + CoA = succinyl-CoA + ADP + phosphate. The enzyme catalyses GTP + succinate + CoA = succinyl-CoA + GDP + phosphate. The protein operates within carbohydrate metabolism; tricarboxylic acid cycle; succinate from succinyl-CoA (ligase route): step 1/1. Functionally, succinyl-CoA synthetase functions in the citric acid cycle (TCA), coupling the hydrolysis of succinyl-CoA to the synthesis of either ATP or GTP and thus represents the only step of substrate-level phosphorylation in the TCA. The beta subunit provides nucleotide specificity of the enzyme and binds the substrate succinate, while the binding sites for coenzyme A and phosphate are found in the alpha subunit. The polypeptide is Succinate--CoA ligase [ADP-forming] subunit beta (Rhizobium rhizogenes (strain K84 / ATCC BAA-868) (Agrobacterium radiobacter)).